We begin with the raw amino-acid sequence, 428 residues long: A-kinase anchor protein 5 (428 aa).

Residues 1 to 170 form an essential to the intracellular anchoring function region; it reads MEITVSEIQV…VTKTQTQSDD (170 aa). 2 disordered regions span residues 1 to 207 and 237 to 313; these read MEIT…SPGE and LEEK…TELS. Residues 10–32 are compositionally biased toward basic and acidic residues; that stretch reads VESKDETRSAEVRPQDERQEEKA. Residue Cys-36 is the site of S-palmitoyl cysteine attachment. The segment covering 37 to 48 has biased composition (basic residues); that stretch reads FKRRKKAAKAMK. Residues 57–68 are compositionally biased toward basic and acidic residues; it reads DAAKKCPPEARA. Positions 76-96 match the AKAP CaM-binding motif; sequence GGAWDSIKRLVTRRKRSESSK. Residue Thr-87 is modified to Phosphothreonine; by PKC. A Phosphoserine; by PKA modification is found at Ser-92. Ser-94 carries the post-translational modification Phosphoserine; by PKC. Cys-129 carries S-palmitoyl cysteine lipidation. A compositionally biased stretch (basic and acidic residues) spans 133 to 156; sequence SKGEKRSNHSKIIEDSDRSVKVQE. Residues 161–170 are compositionally biased toward polar residues; sequence VTKTQTQSDD. 2 stretches are compositionally biased toward basic and acidic residues: residues 171–191 and 290–311; these read QATKSKSPQDVREDVSQKGDD and PDWKEHESREIVVEESKPKDTE. Positions 389 to 410 are RII-beta subunit binding domain; sequence YETLLIETASSLVKNAIQLSIE. The segment at 411–428 is tethers NFATC2 to CRAC channels; it reads QLVNEMASDDNTINNRLQ.

As to quaternary structure, binding protein for dimer of the RII-beta regulatory subunit of cAMP-dependent protein kinase (PKA) and also for the protein kinase C (PKC) and the phosphatase calcineurin (PP2B). Each enzyme is inhibited when bound to the anchoring protein. Also binds the beta2-adrenergic receptor. Part of a complex containing AKAP5, ADCY5, ADCY6 and PDE4C. Interacts with ADCY8, and enhances its phosphorylation at lipid rafts. Interacts with ORAI1 (isoform alpha) (via N-terminus) upon store depletion and in response to LTC4. Does not interact with ORAI2 and ORAI3 paralogs. Interacts (via leucine zipper domain) with NFATC2/NFAT1. Interacts with calmodulin; the interaction is calcium-independent. Interacts with KCNQ2; the interaction may help KCNQ2 channel complex to retain calcium-bound calmodulin. Post-translationally, palmitoylated. Palmitoylation at Cys-36 and Cys-129 play a key role in the targeting of AKAP5 to lipid rafts. Palmitoylation by ZDHHC2 is required for AKAP5 function in LTP-stimulated recycling endosome exocytosis. In terms of tissue distribution, predominantly in brain, and to a lesser extent in adrenal medulla, lung and anterior pituitary.

The protein localises to the postsynaptic recycling endosome membrane. Functionally, multivalent scaffold protein that anchors the cAMP-dependent protein kinase/PKA to cytoskeletal and/or organelle-associated proteins, targeting the signal carried by cAMP to specific intracellular effectors. Association with the beta2-adrenergic receptor (beta2-AR) not only regulates beta2-AR signaling pathway, but also the activation by PKA by switching off the beta2-AR signaling cascade. Plays a role in long term synaptic potentiation by regulating protein trafficking from the dendritic recycling endosomes to the plasma membrane and controlling both structural and functional plasticity at excitatory synapses. Associates with ORAI1 pore-forming subunit of CRAC channels in Ca(2+) signaling microdomains where it recruits NFATC2/NFAT1 and couples store-operated Ca(2+) influx to calmodulin and calcineurin signaling and activation of NFAT-dependent transcriptional responses. This Bos taurus (Bovine) protein is A-kinase anchor protein 5 (AKAP5).